Consider the following 125-residue polypeptide: MPTISQLVRKPREVSIIKSKSPALENCPQRRGVCTRVYTTTPKKPNSALRKVAKVRLTNGYEVISYIGGEGHNLQEHSVVLVRGGRVKDLPGVRYHIVRGSLDLQGVKDRKQARSKYGAKRPKKA.

At Asp-89 the chain carries 3-methylthioaspartic acid.

Belongs to the universal ribosomal protein uS12 family. Part of the 30S ribosomal subunit. Contacts proteins S8 and S17. May interact with IF1 in the 30S initiation complex.

Its function is as follows. With S4 and S5 plays an important role in translational accuracy. In terms of biological role, interacts with and stabilizes bases of the 16S rRNA that are involved in tRNA selection in the A site and with the mRNA backbone. Located at the interface of the 30S and 50S subunits, it traverses the body of the 30S subunit contacting proteins on the other side and probably holding the rRNA structure together. The combined cluster of proteins S8, S12 and S17 appears to hold together the shoulder and platform of the 30S subunit. This Bordetella avium (strain 197N) protein is Small ribosomal subunit protein uS12.